A 92-amino-acid chain; its full sequence is Small ribosomal subunit protein uS19 (92 aa).

It belongs to the universal ribosomal protein uS19 family.

Protein S19 forms a complex with S13 that binds strongly to the 16S ribosomal RNA. This Rhizobium etli (strain CIAT 652) protein is Small ribosomal subunit protein uS19.